The chain runs to 350 residues: Protein FAM118B (350 aa).

An N-acetylalanine modification is found at Ala2. Ser9 carries the phosphoserine modification.

The protein belongs to the FAM118 family.

The protein localises to the nucleus. The protein resides in the cajal body. Its function is as follows. May play a role in Cajal bodies formation. The protein is Protein FAM118B (FAM118B) of Macaca fascicularis (Crab-eating macaque).